Consider the following 515-residue polypeptide: Fatty acyl-CoA reductase 1 (515 aa).

The Cytoplasmic segment spans residues 1–465 (MVSIPEYYEG…ARKHLNKLRN (465 aa)). Positions 451 to 507 (SGLPAARKHLNKLRNIRYGFNTILVILIWRIFIARSQMARNIWYFVVSLCYKFLSYF) are necessary and sufficient for PEX19-mediated localization into peroxisome membrane. The chain crosses the membrane as a helical span at residues 466–483 (IRYGFNTILVILIWRIFI). Over 484 to 515 (ARSQMARNIWYFVVSLCYKFLSYFRASSTMRY) the chain is Peroxisomal.

Belongs to the fatty acyl-CoA reductase family. Interacts with PEX19; PEX19 mediates the targeting of FAR1 to peroxisomes.

Its subcellular location is the peroxisome membrane. It catalyses the reaction a long-chain fatty acyl-CoA + 2 NADPH + 2 H(+) = a long-chain primary fatty alcohol + 2 NADP(+) + CoA. The enzyme catalyses hexadecanoyl-CoA + 2 NADPH + 2 H(+) = hexadecan-1-ol + 2 NADP(+) + CoA. It carries out the reaction octadecanoyl-CoA + 2 NADPH + 2 H(+) = octadecan-1-ol + 2 NADP(+) + CoA. The catalysed reaction is (9Z)-octadecenoyl-CoA + 2 NADPH + 2 H(+) = (9Z)-octadecen-1-ol + 2 NADP(+) + CoA. It catalyses the reaction (9Z,12Z)-octadecadienoyl-CoA + 2 NADPH + 2 H(+) = (9Z,12Z)-octadecadien-1-ol + 2 NADP(+) + CoA. The enzyme catalyses eicosanoyl-CoA + 2 NADPH + 2 H(+) = eicosan-1-ol + 2 NADP(+) + CoA. It carries out the reaction 16-methylheptadecanoyl-CoA + 2 NADPH + 2 H(+) = 16-methylheptadecan-1-ol + 2 NADP(+) + CoA. The catalysed reaction is 18-methylnonadecanoyl-CoA + 2 NADPH + 2 H(+) = 18-methylnonadecan-1-ol + 2 NADP(+) + CoA. Its function is as follows. Catalyzes the reduction of saturated and unsaturated C16 or C18 fatty acyl-CoA to fatty alcohols. It plays an essential role in the production of ether lipids/plasmalogens which synthesis requires fatty alcohols. In parallel, it is also required for wax monoesters production since fatty alcohols also constitute a substrate for their synthesis. In Pongo abelii (Sumatran orangutan), this protein is Fatty acyl-CoA reductase 1.